The sequence spans 310 residues: MTAPVLCIMGPTAVGKSELALSLAERLGGEIVSVDSAQIYRGLDIGTAKPSPAVRARCPHHLIDIRDPAERYSAAEFARDAQAAIAAIRSRGRLPVLVGGTGLYFQALQHGLSPMPAADAQVRAELEAEEAAYGVQALHRRLQAVDPESAARLHPNDSQRIQRALEVHRLTGRPLSQVQREPGQPGLTEMPLKIILEPPERAWLHRRIEARFRAMLAAGLVGEVVALHRRGDLSEELPAVRAVGYRQIWHYLEGACDYRTMIRRGLRATRQYAKRQITWLRGQTDGVRFTADDRLEAQVHSYVTGALGGV.

An ATP-binding site is contributed by 10–17; sequence GPTAVGKS. 12-17 provides a ligand contact to substrate; that stretch reads TAVGKS. Interaction with substrate tRNA regions lie at residues 35-38, 159-163, and 274-281; these read DSAQ, QRIQR, and KRQITWLR.

This sequence belongs to the IPP transferase family. Monomer. It depends on Mg(2+) as a cofactor.

It catalyses the reaction adenosine(37) in tRNA + dimethylallyl diphosphate = N(6)-dimethylallyladenosine(37) in tRNA + diphosphate. Functionally, catalyzes the transfer of a dimethylallyl group onto the adenine at position 37 in tRNAs that read codons beginning with uridine, leading to the formation of N6-(dimethylallyl)adenosine (i(6)A). The protein is tRNA dimethylallyltransferase of Halorhodospira halophila (strain DSM 244 / SL1) (Ectothiorhodospira halophila (strain DSM 244 / SL1)).